Reading from the N-terminus, the 305-residue chain is Protoheme IX farnesyltransferase 1 (305 aa).

The next 9 membrane-spanning stretches (helical) occupy residues 30–50 (IGIV…AFQF), 59–79 (LDVI…SGAM), 108–128 (FVLT…FAAS), 129–149 (FAAG…YSMW), 154–176 (HVSN…FAAV), 180–202 (LGPG…FYAL), 232–252 (LFWI…GIGF), 253–273 (LTLA…GFTA), and 284–304 (FIYS…FAVF).

Belongs to the UbiA prenyltransferase family. Protoheme IX farnesyltransferase subfamily. As to quaternary structure, interacts with CtaA.

It localises to the cell membrane. It carries out the reaction heme b + (2E,6E)-farnesyl diphosphate + H2O = Fe(II)-heme o + diphosphate. The protein operates within porphyrin-containing compound metabolism; heme O biosynthesis; heme O from protoheme: step 1/1. Its function is as follows. Converts heme B (protoheme IX) to heme O by substitution of the vinyl group on carbon 2 of heme B porphyrin ring with a hydroxyethyl farnesyl side group. The polypeptide is Protoheme IX farnesyltransferase 1 (Lysinibacillus sphaericus (strain C3-41)).